Consider the following 153-residue polypeptide: MTHPLVPPITDLAIPVAEQLGLEVVGIVFHTNQRPPVLRVDIRNPQQDTGLDDCERMSRALEAALDATEIIPDAYVLEVSSPGISRQLVTDREFISFKGFPVIVSTSPPHEGQQEWIGQLIRRDETKVYINQKGRVIEIPRSLITRVLLHDGE.

This sequence belongs to the RimP family.

It localises to the cytoplasm. Functionally, required for maturation of 30S ribosomal subunits. In Trichormus variabilis (strain ATCC 29413 / PCC 7937) (Anabaena variabilis), this protein is Ribosome maturation factor RimP.